We begin with the raw amino-acid sequence, 180 residues long: Inorganic pyrophosphatase (180 aa).

Substrate is bound by residues Lys28, Arg42, and Tyr54. The Mg(2+) site is built by Asp66, Asp71, and Asp102. Residue Tyr139 coordinates substrate.

It belongs to the PPase family. Homohexamer. Mg(2+) serves as cofactor.

It is found in the cytoplasm. The catalysed reaction is diphosphate + H2O = 2 phosphate + H(+). Functionally, hydrolyzes PPi generated in anabolic reactions. Catalyzes the hydrolysis of inorganic pyrophosphate (PPi) forming two phosphate ions. This chain is Inorganic pyrophosphatase, found in Pseudanabaena sp. (strain PCC 6903).